A 902-amino-acid polypeptide reads, in one-letter code: Protein translocase subunit SecA (902 aa).

Residues glutamine 85, 103–107, and aspartate 492 each bind ATP; that span reads GEGKT. Positions 846 to 902 are disordered; the sequence is LSYSGGGEEPNQRPKSPRRRSERKIGPNEPCPCGSGKKFKKCHGRVGAPPLPTSQSQ. Zn(2+)-binding residues include cysteine 876, cysteine 878, cysteine 887, and histidine 888.

It belongs to the SecA family. In terms of assembly, monomer and homodimer. Part of the essential Sec protein translocation apparatus which comprises SecA, SecYEG and auxiliary proteins SecDF. Other proteins may also be involved. The cofactor is Zn(2+).

Its subcellular location is the cell membrane. The protein resides in the cytoplasm. It carries out the reaction ATP + H2O + cellular proteinSide 1 = ADP + phosphate + cellular proteinSide 2.. Part of the Sec protein translocase complex. Interacts with the SecYEG preprotein conducting channel. Has a central role in coupling the hydrolysis of ATP to the transfer of proteins into and across the cell membrane, serving as an ATP-driven molecular motor driving the stepwise translocation of polypeptide chains across the membrane. This Rubrobacter xylanophilus (strain DSM 9941 / JCM 11954 / NBRC 16129 / PRD-1) protein is Protein translocase subunit SecA.